The primary structure comprises 336 residues: MAMARSRRDSVWKYCWGLLMVLCRTAISRSIVLEPIYWNSSNSKFLPGQGLVLYPQIGDKLDIICPKVDSKTVGQYEYYKVYMVDKDQADRCTIKKENTPLLNCARPDQDVKFTIKFQEFSPNLWGLEFQKNKDYYIISTSNGSLEGLDNQEGGVCQTRAMKILMKVGQDASSAGSARNHGPTRRPELEAGTNGRSSTTSPFVKPNPGSSTDGNSAGHSGNNLLGSEVALFAGIASGCIIFIVIIITLVVLLLKYRRRHRKHSPQHTTTLSLSTLATPKRGGNNNGSEPSDVIIPLRTADSVFCPHYEKVSGDYGHPVYIVQEMPPQSPANIYYKV.

An N-terminal signal peptide occupies residues 1–28 (MAMARSRRDSVWKYCWGLLMVLCRTAIS). Over 29–232 (RSIVLEPIYW…LLGSEVALFA (204 aa)) the chain is Extracellular. In terms of domain architecture, Ephrin RBD spans 31–167 (IVLEPIYWNS…TRAMKILMKV (137 aa)). A glycan (N-linked (GlcNAc...) asparagine) is linked at N39. Intrachain disulfides connect C65–C104 and C92–C156. Residue N142 is glycosylated (N-linked (GlcNAc...) asparagine). Residues 170 to 216 (DASSAGSARNHGPTRRPELEAGTNGRSSTTSPFVKPNPGSSTDGNSA) form a disordered region. The segment covering 193 to 216 (NGRSSTTSPFVKPNPGSSTDGNSA) has biased composition (polar residues). A helical transmembrane segment spans residues 233-253 (GIASGCIIFIVIIITLVVLLL). Over 254-336 (KYRRRHRKHS…QSPANIYYKV (83 aa)) the chain is Cytoplasmic. S263 carries the post-translational modification Phosphoserine. The residue at position 277 (T277) is a Phosphothreonine. R280 is subject to Omega-N-methylarginine. The PDZ-binding motif lies at 334 to 336 (YKV).

This sequence belongs to the ephrin family. As to quaternary structure, interacts with PDZRN3. Binds to the ephrin receptor EPHA3, EPHA4 and EPHB4. Post-translationally, inducible phosphorylation of tyrosine residues in the cytoplasmic domain. As to expression, expressed in inner and outer pillar cells of the organ of Corti (at protein level). Expressed on lateral floor plate cells, specifically on commissural axon segments that have passed through the floor plate. Expressed in cells of the retinal ganglion cell layer during retinal axon guidance to the optic disk. Expressed in myogenic progenitor cells.

Its subcellular location is the cell membrane. The protein localises to the cell junction. It localises to the adherens junction. In terms of biological role, cell surface transmembrane ligand for Eph receptors, a family of receptor tyrosine kinases which are crucial for migration, repulsion and adhesion during neuronal, vascular and epithelial development. Binds promiscuously Eph receptors residing on adjacent cells, leading to contact-dependent bidirectional signaling into neighboring cells. The signaling pathway downstream of the receptor is referred to as forward signaling while the signaling pathway downstream of the ephrin ligand is referred to as reverse signaling. Binds to receptor tyrosine kinase including EPHA4, EPHA3 and EPHB4. Together with EPHB4 plays a central role in heart morphogenesis and angiogenesis through regulation of cell adhesion and cell migration. EPHB4-mediated forward signaling controls cellular repulsion and segregation from EFNB2-expressing cells. May play a role in constraining the orientation of longitudinally projecting axons. The polypeptide is Ephrin-B2 (Efnb2) (Mus musculus (Mouse)).